The primary structure comprises 117 residues: Large ribosomal subunit protein bL19 (117 aa).

Belongs to the bacterial ribosomal protein bL19 family.

Its function is as follows. This protein is located at the 30S-50S ribosomal subunit interface and may play a role in the structure and function of the aminoacyl-tRNA binding site. This Mycoplasmopsis pulmonis (strain UAB CTIP) (Mycoplasma pulmonis) protein is Large ribosomal subunit protein bL19.